A 121-amino-acid polypeptide reads, in one-letter code: MVHMHITAWALGLILFFVAYSLYSAGRKGKGVHMGLRLMYIIIIVTGFMLYMGIMKTATSNMHMWYGLKMIAGILVIGGMEMVLVKMSKNKATGAVWGLFIVALVAVFYLGLKLPIGWQVF.

The next 4 membrane-spanning stretches (helical) occupy residues 6–26 (ITAWALGLILFFVAYSLYSAG), 38–58 (LMYIIIIVTGFMLYMGIMKTA), 65–85 (WYGLKMIAGILVIGGMEMVLV), and 92–112 (ATGAVWGLFIVALVAVFYLGL).

This sequence belongs to the UPF0344 family.

It is found in the cell membrane. This chain is UPF0344 protein BT9727_1053, found in Bacillus thuringiensis subsp. konkukian (strain 97-27).